The following is a 59-amino-acid chain: Large ribosomal subunit protein bL32 (59 aa).

Over residues 1-16 the composition is skewed to basic residues; it reads MAVPKRKTSPSRRGMR. The interval 1-59 is disordered; the sequence is MAVPKRKTSPSRRGMRRSADALKAPTYVEDKNSGELRRPHHIDLKSGMYRGRQVLEPKE. A compositionally biased stretch (basic and acidic residues) spans 28–44; the sequence is VEDKNSGELRRPHHIDL.

It belongs to the bacterial ribosomal protein bL32 family.

The polypeptide is Large ribosomal subunit protein bL32 (Brucella abortus (strain S19)).